Consider the following 381-residue polypeptide: E3 ubiquitin-protein ligase RNF13 (381 aa).

The first 34 residues, 1 to 34 (MLLSIGMLMLSATQVYTILTVQLFAFLNLLPVEA), serve as a signal peptide directing secretion. Residues 35–182 (DILAYNFENA…VPELSLPLEY (148 aa)) lie on the Lumenal side of the membrane. The PA domain maps to 64 to 160 (LKGFLINSKP…GESSANSLKD (97 aa)). Asn88 carries N-linked (GlcNAc...) asparagine glycosylation. The chain crosses the membrane as a helical span at residues 183–203 (YLIPFLIIVGICLILIVIFMI). At 204 to 381 (TKFVQDRHRN…EQDYNIANTV (178 aa)) the chain is on the cytoplasmic side. The segment at 240 to 282 (CAICLEEYEDGDKLRILPCSHAYHCKCVDPWLTKTKKTCPVCK) adopts an RING-type; atypical zinc-finger fold. Residues 285-381 (VVPSQGDSDS…EQDYNIANTV (97 aa)) form a disordered region. The span at 317 to 328 (SARTQSFGSLSE) shows a compositional bias: polar residues. Over residues 339–357 (SDYEDDDNEETDSSDADNE) the composition is skewed to acidic residues. The span at 365-381 (VQLQPNGEQDYNIANTV) shows a compositional bias: polar residues.

In terms of assembly, interacts with ERN1. Post-translationally, autoubiquitinated. In terms of processing, N-glycosylated and also modified with chondroitin sulfate. As to expression, expressed in the brain, heart, kidney, liver and spleen. Higher expression in adult tissues compared to the embryonic counterparts.

Its subcellular location is the endoplasmic reticulum membrane. The protein resides in the late endosome membrane. It localises to the lysosome membrane. The protein localises to the nucleus inner membrane. It catalyses the reaction S-ubiquitinyl-[E2 ubiquitin-conjugating enzyme]-L-cysteine + [acceptor protein]-L-lysine = [E2 ubiquitin-conjugating enzyme]-L-cysteine + N(6)-ubiquitinyl-[acceptor protein]-L-lysine.. It functions in the pathway protein modification; protein ubiquitination. Its function is as follows. E3 ubiquitin-protein ligase that regulates cell proliferation. Involved in apoptosis regulation. Mediates ER stress-induced activation of JNK signaling pathway and apoptosis by promoting ERN1 activation and splicing of XBP1 mRNA. Also involved in protein trafficking and localization. This chain is E3 ubiquitin-protein ligase RNF13 (Rnf13), found in Mus musculus (Mouse).